The primary structure comprises 205 residues: Small ribosomal subunit protein uS4 (205 aa).

Positions 94-154 constitute an S4 RNA-binding domain; that stretch reads SRLDNSVYRA…TRKDGKIRKN (61 aa).

The protein belongs to the universal ribosomal protein uS4 family. As to quaternary structure, part of the 30S ribosomal subunit. Contacts protein S5. The interaction surface between S4 and S5 is involved in control of translational fidelity.

Its function is as follows. One of the primary rRNA binding proteins, it binds directly to 16S rRNA where it nucleates assembly of the body of the 30S subunit. Functionally, with S5 and S12 plays an important role in translational accuracy. The protein is Small ribosomal subunit protein uS4 of Mesomycoplasma hyopneumoniae (strain 232) (Mycoplasma hyopneumoniae).